We begin with the raw amino-acid sequence, 103 residues long: Cell division protein FtsB (103 aa).

The Cytoplasmic portion of the chain corresponds to 1–3 (MGK). The chain crosses the membrane as a helical span at residues 4-21 (LTLLLLAILVWLQYSLWF). Over 22–103 (GKNGIHDYSR…RAQTAGQNNR (82 aa)) the chain is Periplasmic. The stretch at 31 to 71 (RVNDDVAAQQATNAKLKARNDQLFAEIDDLNGGQEALEERA) forms a coiled coil.

It belongs to the FtsB family. In terms of assembly, part of a complex composed of FtsB, FtsL and FtsQ.

It localises to the cell inner membrane. Essential cell division protein. May link together the upstream cell division proteins, which are predominantly cytoplasmic, with the downstream cell division proteins, which are predominantly periplasmic. This Escherichia fergusonii (strain ATCC 35469 / DSM 13698 / CCUG 18766 / IAM 14443 / JCM 21226 / LMG 7866 / NBRC 102419 / NCTC 12128 / CDC 0568-73) protein is Cell division protein FtsB.